The primary structure comprises 305 residues: MDTHLPFQTLPVSTPLPVSSSSLTDVLQTIAALQACPTSCIPSTSTGMLSPNLPFSATIPRVNLFPPSQPANSLILPTIPAQPFIPNPSLLQANPSAVEALANALFATTSRRASCPEPPASSQATVTLQVPSTGSPERRRYSETNMEVLLREQLAQLMPPTSQLPGMPGCYYQHVPAAGTSGIQGSLDAALMGAVPLAMNSMAHSRRAANHRKARTIYGTTQTQQLEDMFKGQMYVVGAERENLAQRLGLSPSQVRIWFQNRRSKHRRKQQEEQQSTTLEEKSEEIGKDEEEDDEEDEDDVKVLN.

Disordered regions lie at residues 113 to 140 and 262 to 305; these read ASCP…ERRR and RRSK…KVLN. The span at 120–135 shows a compositional bias: polar residues; the sequence is ASSQATVTLQVPSTGS. Residues 211-270 constitute a DNA-binding region (homeobox); sequence HRKARTIYGTTQTQQLEDMFKGQMYVVGAERENLAQRLGLSPSQVRIWFQNRRSKHRRKQ. The segment covering 287-305 has biased composition (acidic residues); that stretch reads GKDEEEDDEEDEDDVKVLN.

Belongs to the distal-less homeobox family.

Its subcellular location is the nucleus. In terms of biological role, probable transcription factor. Required for differentiation of AIY interneurons, acting downstream of LIM/homeobox protein ttx-3. Modulates gene expression, acting downstream of AMP kinase aak-2/AMPK signaling. Modulates lifespan. The protein is Homeobox protein ceh-23 (ceh-23) of Caenorhabditis elegans.